Consider the following 695-residue polypeptide: Polyribonucleotide nucleotidyltransferase (695 aa).

Mg(2+)-binding residues include Asp486 and Asp492. Residues Pro553–Ile612 form the KH domain. Residues Gly622–Lys690 form the S1 motif domain.

It belongs to the polyribonucleotide nucleotidyltransferase family. The cofactor is Mg(2+).

Its subcellular location is the cytoplasm. The enzyme catalyses RNA(n+1) + phosphate = RNA(n) + a ribonucleoside 5'-diphosphate. Its function is as follows. Involved in mRNA degradation. Catalyzes the phosphorolysis of single-stranded polyribonucleotides processively in the 3'- to 5'-direction. In Chlamydia trachomatis serovar L2 (strain ATCC VR-902B / DSM 19102 / 434/Bu), this protein is Polyribonucleotide nucleotidyltransferase.